The chain runs to 338 residues: Acyl-CoA-binding domain-containing protein 1 (338 aa).

The helical; Signal-anchor transmembrane segment at 11-31 (IIFGLIFAYLLAKLISILLAF) threads the bilayer. 2 N-linked (GlcNAc...) asparagine glycosylation sites follow: Asn-35 and Asn-41. Positions 69-89 (AEQGSLRGDEDESDDDDWEGV) are disordered. Acidic residues predominate over residues 77–89 (DEDESDDDDWEGV). An ACB domain is found at 94-184 (LDEAFSAATA…VTQLYPAWVE (91 aa)). An acyl-CoA-binding positions include 126–130 (YGLYK), Lys-152, and Tyr-171. Asn-191 carries an N-linked (GlcNAc...) asparagine glycan. ANK repeat units lie at residues 217 to 246 (LKID…PVNA), 250 to 279 (EGRT…DVNA), 283 to 312 (EGQT…DTTI), and 316 to 338 (DGNS…KDSN).

This sequence belongs to the ACBP family. In terms of assembly, interacts with RAP2-12. Binds to SMO1-1 and SMO1-2. Glycosylated. In seeds, localized in the outer integument. As to expression, expressed at low levels in roots, stems, leaves, flowers, and siliques, especially within seeds.

Its subcellular location is the cell membrane. The protein localises to the secreted. It localises to the cell wall. It is found in the endoplasmic reticulum membrane. Functionally, binds medium- and long-chain acyl-CoA esters with very high affinity. Can interact in vitro with arachidonyl-CoA, barely with oleoyl-CoA, but not with palmitoyl-CoA. Confers tolerance and binds to lead ions Pb(2+), probably by promoting lead translocation from roots to shoots. May function as an intracellular carrier of acyl-CoA esters. Modulates negatively sterol synthesis during embryogenesis and gametophytes development via interactions with SMO1-1 and SMO1-2; sterols serve as lipid modulators for gene expression of homeodomain-leucine zipper IV transcription factors. The sequence is that of Acyl-CoA-binding domain-containing protein 1 from Arabidopsis thaliana (Mouse-ear cress).